The following is a 422-amino-acid chain: L-2-hydroxyglutarate dehydrogenase (422 aa).

It belongs to the L2HGDH family. It depends on FAD as a cofactor.

The protein localises to the cell inner membrane. It catalyses the reaction (S)-2-hydroxyglutarate + a quinone = a quinol + 2-oxoglutarate. Its pathway is amino-acid degradation. Functionally, catalyzes the dehydrogenation of L-2-hydroxyglutarate (L2HG) to alpha-ketoglutarate and couples to the respiratory chain by feeding electrons from the reaction into the membrane quinone pool. Functions in a L-lysine degradation pathway that proceeds via cadaverine, glutarate and L-2-hydroxyglutarate. Also displays some oxidase activity in vitro on L-2-hydroxyglutarate with O2 as the electron acceptor, but this activity is most likely not physiological. In Escherichia coli O17:K52:H18 (strain UMN026 / ExPEC), this protein is L-2-hydroxyglutarate dehydrogenase.